The primary structure comprises 300 residues: 17-beta-hydroxysteroid dehydrogenase 13 (300 aa).

Positions 1-19 (MNIILEILLLLITIIYSYL) are cleaved as a signal peptide. Ser-33 is subject to Phosphoserine. NAD(+) is bound at residue 40 to 67 (LITGAGHGIGRQTTYEFAKRQSILVLWD). Ser-172 serves as a coordination point for substrate. Residue Tyr-185 is the Proton acceptor of the active site. Lys-189 lines the NAD(+) pocket.

Belongs to the short-chain dehydrogenases/reductases (SDR) family. In terms of tissue distribution, highly expressed in the liver. Also detected in ovary, bone marrow, kidney, brain, lung, skeletal muscle, bladder and testis.

It localises to the lipid droplet. The protein resides in the endoplasmic reticulum. It is found in the cytoplasm. It catalyses the reaction 17beta-estradiol + NAD(+) = estrone + NADH + H(+). The catalysed reaction is all-trans-retinol + NAD(+) = all-trans-retinal + NADH + H(+). It carries out the reaction all-trans-retinal + NAD(+) + H2O = all-trans-retinoate + NADH + 2 H(+). Functionally, plays a pivotal role in hepatic lipid metabolism. In vitro, it catalyzes the oxidation of a variety of lipid substrates, including 17beta-estradiol, retinol, retinal, and leukotriene B4. Has retinol/retinal dehydrogenase activity in vitro. In terms of biological role, does not have retinol/retinal dehydrogenase activity in vitro. This is 17-beta-hydroxysteroid dehydrogenase 13 from Homo sapiens (Human).